We begin with the raw amino-acid sequence, 546 residues long: MTPGEVRRLYFIIRTFLSYGLDELIPRMRLTLPLRLWRYSLFWMPNRHKDKLLGERLRLALQELGPVWIKFGQMLSTRRDLFPPQIADQLALLQDKVAPFDGRLAKAQIEEAMGGLPVDAWFDDFDIQPLASASIAQVHTARLKSNGKEVVIKVIRPDILPVIQADLKLIYRLARWVPRLLPDGRRLRPTEVVREYEKTLIDELNLLRESANAIQLRRNFENSPMLYIPEVYSDYCSQNMMVMERIYGIPVSDVAALEKNGTNMKLLAERGVKVFFTQVFRDSFFHADMHPGNIFVSHEHPENPQYIGIDCGIVGSLNKEDKRYLAENFIAFFNRDYRKVAELHVDSGWVPPDTNVEDFEFAIRTVCEPIFEKPLAEISFGHVLLNLFNTARRFNMEVQPQLVLLQKTLLYVEGVGRQLYPQLDLWKTAKPFLESWIKDQVGIPALTRALKEKAPFWVEKMPEIPELVYDSLRQGKYLQHSVDKIARELQVNHVRQSQSRYLLGIGATLLLSGSFLLVNRPEWGLMPGWLMVGGVVVWLVGWRKTR.

The Protein kinase domain maps to 124–502 (DFDIQPLASA…HVRQSQSRYL (379 aa)). ATP-binding positions include 130-138 (LASASIAQV) and Lys-153. Residue Asp-288 is the Proton acceptor of the active site. Helical transmembrane passes span 501–521 (YLLG…VNRP) and 522–542 (EWGL…LVGW).

Belongs to the ABC1 family. UbiB subfamily.

The protein resides in the cell inner membrane. The protein operates within cofactor biosynthesis; ubiquinone biosynthesis [regulation]. Is probably a protein kinase regulator of UbiI activity which is involved in aerobic coenzyme Q (ubiquinone) biosynthesis. The sequence is that of Probable protein kinase UbiB from Salmonella enteritidis PT4 (strain P125109).